The chain runs to 352 residues: C-C chemokine receptor type 5 (352 aa).

Over 1-30 (MDYQVSSPTYDIDYYTSEPCQKINVKQIAA) the chain is Extracellular. Position 3 is a sulfotyrosine (tyrosine 3). 2 O-linked (GalNAc...) serine glycosylation sites follow: serine 6 and serine 7. Tyrosine 10, tyrosine 14, and tyrosine 15 each carry sulfotyrosine. Disulfide bonds link cysteine 20-cysteine 269 and cysteine 101-cysteine 178. The chain crosses the membrane as a helical span at residues 31 to 58 (RLLPPLYSLVFIFGFVGNILVVLILINC). Residues 59–68 (KRLKSMTDIY) are Cytoplasmic-facing. Residues 69-89 (LLNLAISDLLFLLTVPFWAHY) traverse the membrane as a helical segment. Residues 90-102 (AAAQWNFGNTMCQ) lie on the Extracellular side of the membrane. Residues 103 to 124 (LLTGLYFIGFFSGIFFIILLTI) form a helical membrane-spanning segment. At 125–141 (DRYLAIVHAVFALKART) the chain is on the cytoplasmic side. The chain crosses the membrane as a helical span at residues 142 to 166 (VTFGVVTSVITWVVAVFASLPGIIF). Residues 167–198 (TRYQREGLHYTCSSHFPYSQYQFWKNFQTLKI) lie on the Extracellular side of the membrane. Residues 199-218 (VILGLVLPLLVMVICYSGIL) form a helical membrane-spanning segment. Residues 219-235 (KTLLRCRNEKKRHRAVR) are Cytoplasmic-facing. Residues 236–260 (LIFTIMIVYFLFWAPYNIVLLLNTF) traverse the membrane as a helical segment. The Extracellular segment spans residues 261–277 (QEFFGLNNCSSSNRLDQ). A helical membrane pass occupies residues 278 to 301 (AMQVTETLGMTHCCINPIIYAFVG). Residues 302-352 (EKFRNYLLVFFQKHIAKRFCKCCSIFQQEAPERASSVYTRSTGEQETSVGL) lie on the Cytoplasmic side of the membrane. S-palmitoyl cysteine attachment occurs at residues cysteine 321, cysteine 323, and cysteine 324. A phosphoserine; by BARK1 mark is found at serine 336, serine 337, serine 342, and serine 349.

The protein belongs to the G-protein coupled receptor 1 family. As to quaternary structure, interacts with PRAF2. Efficient ligand binding to CCL3/MIP-1alpha and CCL4/MIP-1beta requires sulfation, O-glycosylation and sialic acid modifications. Glycosylation on Ser-6 is required for efficient binding of CCL4. Interacts with GRK2. Interacts with ARRB1 and ARRB2. Interacts with CNIH4. Interacts with S100A4; this interaction stimulates T-lymphocyte chemotaxis. Sulfated on at least 2 of the N-terminal tyrosines. Sulfation is required for efficient binding of the chemokines, CCL3 and CCL4. In terms of processing, palmitoylation in the C-terminal is important for cell surface expression. Post-translationally, phosphorylation on serine residues in the C-terminal is stimulated by binding CC chemokines especially by APO-RANTES. O-glycosylated, but not N-glycosylated. Ser-6 appears to be the major site even if Ser-7 may be also O-glycosylated. Also sialylated glycans present which contribute to chemokine binding. Thr-16 and Ser-17 may also be glycosylated and, if so, with small moieties such as a T-antigen.

The protein localises to the cell membrane. Its function is as follows. Receptor for a number of inflammatory CC-chemokines including CCL3/MIP-1-alpha, CCL4/MIP-1-beta and RANTES and subsequently transduces a signal by increasing the intracellular calcium ion level. May play a role in the control of granulocytic lineage proliferation or differentiation. Participates in T-lymphocyte migration to the infection site by acting as a chemotactic receptor. This chain is C-C chemokine receptor type 5 (CCR5), found in Erythrocebus patas (Red guenon).